The sequence spans 107 residues: DNA-directed RNA polymerase subunit omega (107 aa).

The protein belongs to the RNA polymerase subunit omega family. In terms of assembly, the RNAP catalytic core consists of 2 alpha, 1 beta, 1 beta' and 1 omega subunit. When a sigma factor is associated with the core the holoenzyme is formed, which can initiate transcription.

It catalyses the reaction RNA(n) + a ribonucleoside 5'-triphosphate = RNA(n+1) + diphosphate. In terms of biological role, promotes RNA polymerase assembly. Latches the N- and C-terminal regions of the beta' subunit thereby facilitating its interaction with the beta and alpha subunits. The polypeptide is DNA-directed RNA polymerase subunit omega (Mycolicibacterium smegmatis (strain ATCC 700084 / mc(2)155) (Mycobacterium smegmatis)).